The chain runs to 630 residues: Pro-interleukin-16 (630 aa).

Disordered regions lie at residues 30 to 268 (ENPG…FPLT) and 316 to 343 (PKEGASPTSSSNEDSAANGSAETSASDT). Over residues 129 to 143 (IRASSSSSIKQRISS) the composition is skewed to low complexity. Ser-220 is subject to Phosphoserine. Over residues 321 to 343 (SPTSSSNEDSAANGSAETSASDT) the composition is skewed to polar residues. Positions 404–500 (KQLDSIHVTI…IVTRKLTAES (97 aa)) are interaction with PPP1R12A, PPP1R12B and PPP1R12C. 2 consecutive PDZ domains span residues 410 to 495 (HVTI…VTRK) and 532 to 617 (TVTL…IRRK).

Homotetramer. Pro-interleukin-16 interacts (via PDZ 2 domain) with PPP1R12A, PPP1R12B and PPP1R12C. Pro-interleukin-16 interacts with GRIN2A. Pro-interleukin-16 interacts with GABPB1. Pro-interleukin-16 interacts (via PDZ 3 domain) with HDAC3.

It is found in the secreted. The protein localises to the cytoplasm. Its subcellular location is the nucleus. Its function is as follows. Interleukin-16 stimulates a migratory response in CD4+ lymphocytes, monocytes, and eosinophils. Primes CD4+ T-cells for IL-2 and IL-15 responsiveness. Also induces T-lymphocyte expression of interleukin 2 receptor. Ligand for CD4. Pro-interleukin-16 is involved in cell cycle progression in T-cells. Appears to be involved in transcriptional regulation of SKP2 and is probably part of a transcriptional repression complex on the core promoter of the SKP2 gene. May act as a scaffold for GABPB1 (the DNA-binding subunit the GABP transcription factor complex) and HDAC3 thus maintaining transcriptional repression and blocking cell cycle progression in resting T-cells. This is Pro-interleukin-16 (IL16) from Macaca mulatta (Rhesus macaque).